The chain runs to 1051 residues: Serine/threonine-protein kinase ULK1 (1051 aa).

Residues 16–278 (FSRKDLIGHG…FDEFFHHPFL (263 aa)) enclose the Protein kinase domain. ATP is bound by residues 22-30 (IGHGAFAVV) and K46. Catalysis depends on D138, which acts as the Proton acceptor. At K162 the chain carries N6-acetyllysine. Disordered stretches follow at residues 283–323 (PIKK…EMPQ), 335–358 (AGFL…DDFV), and 394–554 (GLES…CRLH). Residues 287–416 (SPPVPVPSYP…TCSSSPSPSG (130 aa)) form an interaction with GABARAP and GABARAPL2 region. 3 stretches are compositionally biased toward low complexity: residues 295–318 (YPSS…PPSL), 340–349 (GSRDSGGSSK), and 400–423 (RTPS…PFSS). S317 is subject to Phosphoserine; by AMPK. A phosphoserine mark is found at S403 and S450. Residues 437 to 459 (QVHNYQRIEQNLQSPTQQQTARS) show a composition bias toward polar residues. At T456 the chain carries Phosphothreonine. Phosphoserine is present on residues S467, S477, S479, and S521. At S555 the chain carries Phosphoserine; by AMPK. A Phosphothreonine modification is found at T574. K606 carries the N6-acetyllysine modification. T635 is subject to Phosphothreonine. The residue at position 637 (S637) is a Phosphoserine; by AMPK. S638 carries the post-translational modification Phosphoserine. 2 disordered regions span residues 661-686 (PDLS…DTRG) and 727-787 (APSA…TGSS). Positions 731-745 (GFGGTLHPGARGGGA) are enriched in gly residues. S757 bears the Phosphoserine; by MTOR mark. The residue at position 774 (S774) is a Phosphoserine. Low complexity predominate over residues 774 to 787 (SVGSSSSLGSTGSS). At S777 the chain carries Phosphoserine; by AMPK. The segment at 829–1051 (PDLPEETLME…LSALLSGVYA (223 aa)) is C-terminal domain; mediates interaction with SESN2.

This sequence belongs to the protein kinase superfamily. Ser/Thr protein kinase family. APG1/unc-51/ULK1 subfamily. Interacts with GABARAP and GABARAPL2. Interacts (via C-terminus) with ATG13. Part of a complex consisting of ATG13, ATG101, ULK1 and RB1CC1. Associates with the mammalian target of rapamycin complex 1 (mTORC1) through an interaction with RPTOR; the association depends on nutrient conditions and is reduced during starvation. Interacts with FEZ1; SCOC interferes with FEZ1-binding. Interacts with TBC1D14. Interacts (phosphorylated form) with TRIM5. When phosphorylated at Ser-317, interacts with MEFV and BECN1 simultaneously. Interacts with TRIM21 and IRF3, in the presence of TRIM21. Interacts with SESN2. Interacts with SQSTM1. Interacts with C9orf72. Interacts with WDR45. Interacts with ATG13; this interaction is increased in the absence of TMEM39A. Interacts with WIPI2. Interacts with ATP2A2. Interacts with AMBRA1. Interacts with Irgm1; promoting the coassembly of ULK1 and BECN1. Autophosphorylated. Phosphorylated under nutrient-rich conditions; dephosphorylated during starvation or following treatment with rapamycin. In response to nutrient limitation, phosphorylated and activated by AMPK, leading to activate autophagy. Under nutrient sufficiency, phosphorylated by MTOR/mTOR, disrupting the interaction with AMPK and preventing activation of ULK1. Post-translationally, ubiquitinated via 'Lys-63'-linkage by a complex composed of AMBRA1 and TRAF6 following autophagy induction, promoting ULK1 stability and kinase activity. Deubiquitinated by USP20; leading to ULK1 stability and autophagy initiation. In terms of processing, acetylated by KAT5/TIP60 under autophagy induction, promoting protein kinase activity.

The protein localises to the cytoplasm. It is found in the cytosol. Its subcellular location is the preautophagosomal structure. The enzyme catalyses L-seryl-[protein] + ATP = O-phospho-L-seryl-[protein] + ADP + H(+). It carries out the reaction L-threonyl-[protein] + ATP = O-phospho-L-threonyl-[protein] + ADP + H(+). With respect to regulation, acetylation by KAT5/TIP60 stimulates the protein kinase activity. The protein kinase activity is activated by unanchored 'Lys-63'-linked polyubiquitin chains: unanchored 'Lys-63'-linked polyubiquitin chains are catalyzed by TRIM32 in an AMBRA1-dependent manner. Functionally, serine/threonine-protein kinase involved in autophagy in response to starvation. Acts upstream of phosphatidylinositol 3-kinase PIK3C3 to regulate the formation of autophagophores, the precursors of autophagosomes. Part of regulatory feedback loops in autophagy: acts both as a downstream effector and negative regulator of mammalian target of rapamycin complex 1 (mTORC1) via interaction with RPTOR. Activated via phosphorylation by AMPK and also acts as a regulator of AMPK by mediating phosphorylation of AMPK subunits PRKAA1, PRKAB2 and PRKAG1, leading to negatively regulate AMPK activity. May phosphorylate ATG13/KIAA0652 and RPTOR; however such data need additional evidences. Plays a role early in neuronal differentiation and is required for granule cell axon formation. Also phosphorylates SESN2 and SQSTM1 to regulate autophagy. Phosphorylates FLCN, promoting autophagy. Phosphorylates AMBRA1 in response to autophagy induction, releasing AMBRA1 from the cytoskeletal docking site to induce autophagosome nucleation. Phosphorylates ATG4B, leading to inhibit autophagy by decreasing both proteolytic activation and delipidation activities of ATG4B. The protein is Serine/threonine-protein kinase ULK1 (Ulk1) of Mus musculus (Mouse).